A 506-amino-acid chain; its full sequence is Epstein-Barr nuclear antigen leader protein (506 aa).

2 disordered regions span residues 1–470 (MGDR…PRPP) and 485–506 (FEPP…EDED). Ser-35 carries the phosphoserine; by host modification.

Belongs to the lymphocryptovirus EBNA-LP family. In terms of assembly, homooligomer. Interacts with host SP100; this interaction is important for EBNA-LP coactivator activity. Interacts with host HAX1, ERR1 and HSPA2. Interacts with host PRKDC and AKAP8L; these interactions modulate the coactivator function of EBNA-LP. Phosphorylated by the cellular protein kinase cdc2.

The protein resides in the host nucleus. Functionally, plays an important role in the establishment of B-cell immortalization by acting as an EBNA2 coactivator. This transcriptional activation preferentially enhances the expression of the major viral protein LMP1. The interaction between EBNA-LP and host SP100 correlates with coactivation of EBNA2 and the relocalization of SP100 from PML nuclear bodies into nucleoplasm. In Epstein-Barr virus (strain B95-8) (HHV-4), this protein is Epstein-Barr nuclear antigen leader protein (EBNA-LP).